A 61-amino-acid chain; its full sequence is Probable tautomerase spyM18_1099 (61 aa).

The active-site Proton acceptor; via imino nitrogen is the Pro2.

It belongs to the 4-oxalocrotonate tautomerase family.

This is Probable tautomerase spyM18_1099 from Streptococcus pyogenes serotype M18 (strain MGAS8232).